The following is a 96-amino-acid chain: MTEPPLPHESADDGRARLSYEDARDELIQIVQRLELGGLPLEEALRLWERGEELARVCQAWLDGARARLEAYRAPEQSAANDVSAPGSAEEHDHGR.

A disordered region spans residues 73–96; that stretch reads RAPEQSAANDVSAPGSAEEHDHGR.

This sequence belongs to the XseB family. In terms of assembly, heterooligomer composed of large and small subunits.

It localises to the cytoplasm. The enzyme catalyses Exonucleolytic cleavage in either 5'- to 3'- or 3'- to 5'-direction to yield nucleoside 5'-phosphates.. Functionally, bidirectionally degrades single-stranded DNA into large acid-insoluble oligonucleotides, which are then degraded further into small acid-soluble oligonucleotides. This is Exodeoxyribonuclease 7 small subunit from Acidothermus cellulolyticus (strain ATCC 43068 / DSM 8971 / 11B).